A 286-amino-acid chain; its full sequence is UDP-3-O-acyl-N-acetylglucosamine deacetylase (286 aa).

Zn(2+) contacts are provided by His79, His237, and Asp241. Catalysis depends on His264, which acts as the Proton donor.

The protein belongs to the LpxC family. It depends on Zn(2+) as a cofactor.

The catalysed reaction is a UDP-3-O-[(3R)-3-hydroxyacyl]-N-acetyl-alpha-D-glucosamine + H2O = a UDP-3-O-[(3R)-3-hydroxyacyl]-alpha-D-glucosamine + acetate. Its pathway is glycolipid biosynthesis; lipid IV(A) biosynthesis; lipid IV(A) from (3R)-3-hydroxytetradecanoyl-[acyl-carrier-protein] and UDP-N-acetyl-alpha-D-glucosamine: step 2/6. Functionally, catalyzes the hydrolysis of UDP-3-O-myristoyl-N-acetylglucosamine to form UDP-3-O-myristoylglucosamine and acetate, the committed step in lipid A biosynthesis. This Brucella melitensis biotype 2 (strain ATCC 23457) protein is UDP-3-O-acyl-N-acetylglucosamine deacetylase.